A 311-amino-acid chain; its full sequence is tRNA dimethylallyltransferase (311 aa).

Residue 9–16 participates in ATP binding; sequence GPTAVGKT. Substrate is bound at residue 11–16; the sequence is TAVGKT. The interaction with substrate tRNA stretch occupies residues 34–37; that stretch reads DSMQ.

This sequence belongs to the IPP transferase family. Monomer. The cofactor is Mg(2+).

The enzyme catalyses adenosine(37) in tRNA + dimethylallyl diphosphate = N(6)-dimethylallyladenosine(37) in tRNA + diphosphate. Its function is as follows. Catalyzes the transfer of a dimethylallyl group onto the adenine at position 37 in tRNAs that read codons beginning with uridine, leading to the formation of N6-(dimethylallyl)adenosine (i(6)A). This chain is tRNA dimethylallyltransferase, found in Clostridium botulinum (strain Okra / Type B1).